Reading from the N-terminus, the 669-residue chain is MGSNSSRIGDLPKNQYLKKLSGTESISENDPFWNQLLSFSFPAPTSSTELKLLEEATISVCRSLVENNPRTGNLGALIKVFLSRTKELKLSAECQNHIFIWQTHNALFIICCLLKVFICQMSEEELQLHFTYEEKSPGNYSSDSEDLLEELLCCLMQLITDIPLLDITYEISVEAISTMVVFLSCQLFHKEVLRQSISHKYLMRGPCLPYTSKLVKTLLYNFIRQEKPPPPGAHVFPQQSDGGGLLYGLASGVATGLWTVFTLGGVGSKVAASPELSSPLANQSLLLLLVLANLTDASDAPNPYRQAIMSFKNTQDSSPFPPLIPHAFQINFNSLYTALCEQQTSDQATLLLYTLLHQNSNIRTYMLARTDMENLVLPILEILYHVEERNSHHVYMALIILLILTEDDGFNRSIHEVILKNITWYSERVLTEISLGSLLILVVIRTIQYNMTRTRDKYLHTNCLAALANMSAQFRSLHQYAAQRIISLFSLLSKKHNKVLEQATQSLRGSLSSNDVPLPDYAQDLNVIEEVIRMMLEIINSCLTNSLHHNPNLVYALLYKRDLFEQFRTHPSFQDIMQNIDLVITFFSSRLLQAGAELSVERVLEIIKQGVVALPKDRLKKFPELKFKYVEEEQPEEFFIPYVWSLVYNSAVGLYWNPQDIQLFTMDSD.

The N-myristoyl glycine moiety is linked to residue G2.

It belongs to the dymeclin family. Interacts with GOLM1 and PPIB. Myristoylated in vitro; myristoylation is not essential for protein targeting to Golgi compartment.

It is found in the cytoplasm. The protein localises to the golgi apparatus. The protein resides in the membrane. In terms of biological role, necessary for correct organization of Golgi apparatus. Involved in bone development. The polypeptide is Dymeclin (DYM) (Pongo abelii (Sumatran orangutan)).